A 602-amino-acid chain; its full sequence is Pyranose dehydrogenase 1 (602 aa).

The N-terminal stretch at 1–25 (MLPRVTKLNSRLLSLALLGIQIARG) is a signal peptide. N-linked (GlcNAc...) asparagine glycosylation occurs at asparagine 100. Histidine 128 carries the tele-8alpha-FAD histidine modification. 3 N-linked (GlcNAc...) asparagine glycosylation sites follow: asparagine 200, asparagine 277, and asparagine 344. Histidine 537 (proton acceptor) is an active-site residue. The active site involves histidine 581.

This sequence belongs to the GMC oxidoreductase family. As to quaternary structure, monomer. FAD serves as cofactor. N-glycosylated.

The protein resides in the secreted. It carries out the reaction pyranose + acceptor = pyranos-2-ulose + reduced acceptor.. It catalyses the reaction pyranose + acceptor = pyranos-3-ulose + reduced acceptor.. The enzyme catalyses pyranose + acceptor = pyranos-2,3-diulose + reduced acceptor.. The catalysed reaction is a pyranoside + acceptor = a pyranosid-3-ulose + reduced acceptor.. It carries out the reaction a pyranoside + acceptor = a pyranosid-3,4-diulose + reduced acceptor.. Its function is as follows. Catalyzes the single-oxidation or sequential double oxidation reaction of carbohydrates primarily at carbon-2 and/or carbon-3 with the concomitant reduction of the flavin. The enzyme exhibits a broad sugar substrate specificity, oxidizing different aldopyranoses to the corresponding C-1, C-2, C-3 or C-1,2, C-2,3 and C-3,4 (di)dehydro sugars with substrate-specific regioselectivity. Accepts only a narrow range of electron acceptors such as substituted benzoquinones and complexed metal ions and reacts extremely slowly with O(2) as acceptor. May play a role in the natural recycling of plant matter by oxidizing all major monosaccharides in lignocellulose and by reducing quinone compounds or reactive radical species generated during lignin depolymerization. In Leucoagaricus meleagris (Western flat-topped agaric), this protein is Pyranose dehydrogenase 1.